A 158-amino-acid chain; its full sequence is Ribonuclease H (158 aa).

In terms of domain architecture, RNase H type-1 spans 9-155 (AFKPVELYTD…CDKLAVAAYQ (147 aa)). 4 residues coordinate Mg(2+): Asp18, Glu58, Asp80, and Asp147.

It belongs to the RNase H family. As to quaternary structure, monomer. Requires Mg(2+) as cofactor.

Its subcellular location is the cytoplasm. It catalyses the reaction Endonucleolytic cleavage to 5'-phosphomonoester.. In terms of biological role, endonuclease that specifically degrades the RNA of RNA-DNA hybrids. The sequence is that of Ribonuclease H from Rhodopirellula baltica (strain DSM 10527 / NCIMB 13988 / SH1).